The chain runs to 92 residues: Non-specific lipid-transfer protein B (92 aa).

4 disulfide bridges follow: Cys3–Cys51, Cys13–Cys28, Cys29–Cys74, and Cys49–Cys88.

Belongs to the plant LTP family.

In terms of biological role, plant non-specific lipid-transfer proteins transfer phospholipids as well as galactolipids across membranes. May play a role in wax or cutin deposition in the cell walls of expanding epidermal cells and certain secretory tissues. This is Non-specific lipid-transfer protein B from Ricinus communis (Castor bean).